A 280-amino-acid polypeptide reads, in one-letter code: GTP-binding protein rhoC (280 aa).

The disordered stretch occupies residues 13–59 (TSRRHSLVTPPPSVAPRQNRMRSQSVRVSNGTVSTDNSMSSGRVSEA). The segment covering 33–59 (MRSQSVRVSNGTVSTDNSMSSGRVSEA) has biased composition (polar residues). GTP is bound at residue 76 to 83 (GDGGCGKT). The Effector region signature appears at 98–106 (YVPTVFENY). Residues 125–129 (DTAGQ) and 183–186 (LKSD) each bind GTP. A disordered region spans residues 251-275 (WDTRLPSSSGKPGGKPIGGKKIKKR). The residue at position 277 (Cys277) is a Cysteine methyl ester. Cys277 carries S-geranylgeranyl cysteine lipidation. The propeptide at 278-280 (KIL) is removed in mature form.

The protein belongs to the small GTPase superfamily. Rho family.

The protein localises to the cell membrane. The protein is GTP-binding protein rhoC (rhoC) of Emericella nidulans (strain FGSC A4 / ATCC 38163 / CBS 112.46 / NRRL 194 / M139) (Aspergillus nidulans).